The sequence spans 227 residues: LexA repressor (227 aa).

The segment at residues 26 to 46 (FDEMKEALDLASKSGIHRLIT) is a DNA-binding region (H-T-H motif). Residues Ser147 and Lys185 each act as for autocatalytic cleavage activity in the active site.

Belongs to the peptidase S24 family. As to quaternary structure, homodimer.

It catalyses the reaction Hydrolysis of Ala-|-Gly bond in repressor LexA.. Represses a number of genes involved in the response to DNA damage (SOS response), including recA and lexA. In the presence of single-stranded DNA, RecA interacts with LexA causing an autocatalytic cleavage which disrupts the DNA-binding part of LexA, leading to derepression of the SOS regulon and eventually DNA repair. This chain is LexA repressor, found in Hyphomonas neptunium (strain ATCC 15444).